The primary structure comprises 103 residues: Cyclotide vitri-A (103 aa).

Positions Ala-1–Ala-9 are cleaved as a signal peptide. A propeptide spanning residues Ser-10–Asn-69 is cleaved from the precursor. Residues Gly-70–Asn-99 constitute a cross-link (cyclopeptide (Gly-Asn)). Cystine bridges form between Cys-73/Cys-89, Cys-77/Cys-91, and Cys-82/Cys-96. The propeptide occupies Ser-100–Asn-103.

In terms of processing, this is a cyclic peptide.

Probably participates in a plant defense mechanism. The sequence is that of Cyclotide vitri-A from Viola biflora (Yellow wood violet).